A 542-amino-acid chain; its full sequence is Protein phosphatase 1G (542 aa).

A lipid anchor (N-myristoyl glycine) is attached at G2. R22 carries the post-translational modification Omega-N-methylarginine. Positions 26 to 502 constitute a PPM-type phosphatase domain; the sequence is PYGFSAMQGW…DNMTCIIICF (477 aa). Mn(2+) contacts are provided by D60 and G61. 2 disordered regions span residues 117–136 and 164–325; these read IAGRPTEDEDDKDKVADEDD and CQKV…SDSG. Position 122 is a phosphothreonine (T122). Acidic residues-rich tracts occupy residues 123–136 and 259–309; these read EDEDDKDKVADEDD and DSED…DEEM. K380 carries the post-translational modification N6-acetyllysine. Mn(2+)-binding residues include D438 and D493. Residues 513–542 form a disordered region; that stretch reads ESGKRKLEEALSTEGAEDTGNSDKKKAKRD. S524 carries the phosphoserine modification.

Belongs to the PP2C family. Interacts with NOL3; may dephosphorylate NOL3. Mg(2+) is required as a cofactor. The cofactor is Mn(2+). As to expression, highly expressed in testis. Low level of expression in kidney. Also expressed in a number of tissues undergoing proliferation including embryo, uterus at pregnancy, placenta, and ovaries.

The protein resides in the nucleus. It localises to the membrane. The enzyme catalyses O-phospho-L-seryl-[protein] + H2O = L-seryl-[protein] + phosphate. It catalyses the reaction O-phospho-L-threonyl-[protein] + H2O = L-threonyl-[protein] + phosphate. Its function is as follows. May be involved in regulation of cell cycle. This chain is Protein phosphatase 1G (Ppm1g), found in Mus musculus (Mouse).